The primary structure comprises 970 residues: Protein tweety (970 aa).

Residues 1-47 (MGDYHEFTDQYKVPVIAKLLHALPHYNITFHKINSTFRPNDEIYLES) lie on the Extracellular side of the membrane. Residues asparagine 27 and asparagine 34 are each glycosylated (N-linked (GlcNAc...) asparagine). The helical transmembrane segment at 48 to 68 (LGILGSVPAALLIVSLLGLLF) threads the bilayer. The Cytoplasmic portion of the chain corresponds to 69 to 89 (YLMTRCCDRKPRPAHSITSLK). The chain crosses the membrane as a helical span at residues 90–110 (VALSIVTVMCCAAIGLGLYGN). The Extracellular segment spans residues 111-219 (DDLHNGLLEV…GDQWELIRWP (109 aa)). N-linked (GlcNAc...) asparagine glycosylation is found at asparagine 136, asparagine 166, and asparagine 183. A helical transmembrane segment spans residues 220 to 240 (GTVATLALLLVLCAVLLVGVA). Over 241–246 (RHSRCA) the chain is Cytoplasmic. A helical transmembrane segment spans residues 247 to 267 (LILFSVCGLLAVTGSWLMSGL). Residues 268-395 (YLSSSVAVGD…RGLCEGGLLG (128 aa)) are Extracellular-facing. Asparagine 359 is a glycosylation site (N-linked (GlcNAc...) asparagine). The chain crosses the membrane as a helical span at residues 396 to 416 (LVLMLIASFIAAILLTIMVWV). Residues 417-970 (DSHTWIYIRK…DESNYAVTEL (554 aa)) are Cytoplasmic-facing. The segment covering 532-571 (NAAANMPPTTQAAQQQQQQQAQQQQQQAQQQLGGPQPIYC) has biased composition (low complexity). 3 disordered regions span residues 532 to 587 (NAAA…QHPH), 677 to 763 (RQNS…NESD), and 849 to 970 (MKAI…VTEL). The span at 572–587 (HHPHQHPHPHPHQHPH) shows a compositional bias: basic residues. 3 stretches are compositionally biased toward low complexity: residues 689-700 (HQHPPSLHQQQQ), 707-737 (QQQQQLHQLKSPQQHQQQLQQHQQQQQQQHH), and 745-759 (QHQQQQQQHHQQQQP). The segment covering 852 to 868 (IPPPRIGTPTSPPPPVA) has biased composition (pro residues). 2 stretches are compositionally biased toward gly residues: residues 883-894 (QNGGAVVGGGGA) and 931-945 (NGGGGGSVGGGGGGA). A compositionally biased stretch (polar residues) spans 961–970 (DESNYAVTEL).

The protein belongs to the tweety family.

It is found in the cell membrane. Its function is as follows. Non-essential protein that probably acts as a chloride channel. The protein is Protein tweety (tty) of Drosophila melanogaster (Fruit fly).